Consider the following 171-residue polypeptide: Spiderine-2b (171 aa).

The first 18 residues, 1–18, serve as a signal peptide directing secretion; the sequence is MKFALVLLGFCAFYLVNA. A propeptide spans 19 to 58 (removed in mature form); the sequence is TGDLETELEASDLQELQEALDLIAETPLESLEAEELEEAR. The tract at residues 59–104 is linear cationic cytotoxin domain; sequence KFKFPKINWGKLASKAKDVYKKGQKLAKNKNVKKALKYGKQLAENL. An Oxytoxin-type inhibitor cystine knot (ICK) domain is found at 118–171; it reads NNKCWAIGTRCTDDCDCCPEHHCHCPAKSWTFGLIPCSCQVTESDKVNKCPPAE. Intrachain disulfides connect cysteine 121-cysteine 135, cysteine 128-cysteine 140, cysteine 132-cysteine 167, cysteine 134-cysteine 156, and cysteine 142-cysteine 154.

Belongs to the spiderine family. Cationic/spiderine subfamily. As to expression, expressed by the venom gland.

It is found in the secreted. Its function is as follows. Has antimicrobial, insecticidal, cytolytic and cytotoxic activity. The chain is Spiderine-2b from Oxyopes takobius (Lynx spider).